Here is a 230-residue protein sequence, read N- to C-terminus: 2,3-bisphosphoglycerate-dependent phosphoglycerate mutase (230 aa).

Residues 8–15 (RHGESEWN), 21–22 (TG), Arg-60, 87–90 (ERHY), Lys-98, 114–115 (RR), and 183–184 (GN) each bind substrate. His-9 serves as the catalytic Tele-phosphohistidine intermediate. Glu-87 functions as the Proton donor/acceptor in the catalytic mechanism.

The protein belongs to the phosphoglycerate mutase family. BPG-dependent PGAM subfamily.

It catalyses the reaction (2R)-2-phosphoglycerate = (2R)-3-phosphoglycerate. It participates in carbohydrate degradation; glycolysis; pyruvate from D-glyceraldehyde 3-phosphate: step 3/5. Functionally, catalyzes the interconversion of 2-phosphoglycerate and 3-phosphoglycerate. The polypeptide is 2,3-bisphosphoglycerate-dependent phosphoglycerate mutase (Streptococcus sanguinis (strain SK36)).